Consider the following 416-residue polypeptide: Exodeoxyribonuclease 7 large subunit (416 aa).

This sequence belongs to the XseA family. In terms of assembly, heterooligomer composed of large and small subunits.

The protein resides in the cytoplasm. The enzyme catalyses Exonucleolytic cleavage in either 5'- to 3'- or 3'- to 5'-direction to yield nucleoside 5'-phosphates.. Its function is as follows. Bidirectionally degrades single-stranded DNA into large acid-insoluble oligonucleotides, which are then degraded further into small acid-soluble oligonucleotides. This is Exodeoxyribonuclease 7 large subunit from Sulfurimonas denitrificans (strain ATCC 33889 / DSM 1251) (Thiomicrospira denitrificans (strain ATCC 33889 / DSM 1251)).